A 183-amino-acid chain; its full sequence is Negative modulator of initiation of replication (183 aa).

Residues 118–122 (RTRIY) form an interaction with DNA region.

This sequence belongs to the SeqA family. In terms of assembly, homodimer. Polymerizes to form helical filaments.

Its subcellular location is the cytoplasm. In terms of biological role, negative regulator of replication initiation, which contributes to regulation of DNA replication and ensures that replication initiation occurs exactly once per chromosome per cell cycle. Binds to pairs of hemimethylated GATC sequences in the oriC region, thus preventing assembly of replication proteins and re-initiation at newly replicated origins. Repression is relieved when the region becomes fully methylated. The sequence is that of Negative modulator of initiation of replication from Proteus mirabilis (strain HI4320).